The chain runs to 513 residues: Sulfhydryl oxidase 1 (513 aa).

The N-terminal stretch at 1–30 (MAAAAVARRVVLVLVLAAASLAAAPRGAAA) is a signal peptide. Residues 31 to 174 (RSLGGREGPG…LLKWINNQMK (144 aa)) form the Thioredoxin domain. Asparagine 51 carries an N-linked (GlcNAc...) asparagine glycan. Active-site nucleophile residues include cysteine 76 and cysteine 79. Cysteine 76 and cysteine 79 are disulfide-bonded. 2 N-linked (GlcNAc...) asparagine glycosylation sites follow: asparagine 193 and asparagine 266. The cysteines at positions 301 and 313 are disulfide-linked. The ERV/ALR sulfhydryl oxidase domain occupies 304-406 (SKSETRGFSC…GDPLFPKVTW (103 aa)). Residues arginine 309, tryptophan 316, histidine 320, glutamate 350, histidine 354, 377–384 (WSTHNKVN), lysine 403, and tryptophan 406 contribute to the FAD site. Cysteines 348 and 351 form a disulfide. The cysteines at positions 412 and 415 are disulfide-linked.

FAD serves as cofactor.

It localises to the secreted. It catalyses the reaction 2 R'C(R)SH + O2 = R'C(R)S-S(R)CR' + H2O2. Its function is as follows. Catalyzes the oxidation of sulfhydryl groups in peptide and protein thiols to disulfides with the reduction of oxygen to hydrogen peroxide. May contribute to disulfide bond formation in a variety of secreted proteins. This Oryza sativa subsp. japonica (Rice) protein is Sulfhydryl oxidase 1 (QSOX1).